Here is a 134-residue protein sequence, read N- to C-terminus: Ribosome-binding factor A (134 aa).

This sequence belongs to the RbfA family. In terms of assembly, monomer. Binds 30S ribosomal subunits, but not 50S ribosomal subunits or 70S ribosomes.

Its subcellular location is the cytoplasm. One of several proteins that assist in the late maturation steps of the functional core of the 30S ribosomal subunit. Associates with free 30S ribosomal subunits (but not with 30S subunits that are part of 70S ribosomes or polysomes). Required for efficient processing of 16S rRNA. May interact with the 5'-terminal helix region of 16S rRNA. This is Ribosome-binding factor A from Rhizobium johnstonii (strain DSM 114642 / LMG 32736 / 3841) (Rhizobium leguminosarum bv. viciae).